Reading from the N-terminus, the 204-residue chain is Phosphoribosyl-dephospho-CoA transferase (204 aa).

Active-site residues include D129 and D131.

It belongs to the MdcG family.

The catalysed reaction is apo-[malonate decarboxylase ACP] + 2'-(5''-triphospho-alpha-D-ribosyl)-3'-dephospho-CoA = holo-[malonate decarboxylase ACP] + diphosphate. Its function is as follows. Transfers 2'-(5-triphosphoribosyl)-3'-dephosphocoenzyme-A to the apo-[acyl-carrier-protein] of the malonate decarboxylase to yield holo-[acyl-carrier-protein]. This Pseudomonas putida (strain GB-1) protein is Phosphoribosyl-dephospho-CoA transferase.